A 690-amino-acid chain; its full sequence is Protein arginine N-methyltransferase 7 (690 aa).

SAM-dependent MTase PRMT-type domains are found at residues 5–355 and 364–690; these read FQDS…FSLW and KEPL…EEEQ.

The protein belongs to the class I-like SAM-binding methyltransferase superfamily. Protein arginine N-methyltransferase family. PRMT7 subfamily.

In terms of biological role, essential arginine methyltransferase that can both catalyze the formation of omega-N monomethylarginine (MMA) and symmetrical dimethylarginine (sDMA). Specifically mediates the symmetrical dimethylation of arginine residues in the small nuclear ribonucleoproteins SmD1 and SmD3. The sequence is that of Protein arginine N-methyltransferase 7 (Art7) from Anopheles gambiae (African malaria mosquito).